A 422-amino-acid chain; its full sequence is uncharacterized protein (422 aa).

12 consecutive transmembrane segments (helical) span residues 23–43 (IVKI…LIYD), 47–67 (AIGT…LAPV), 90–110 (AIVL…WFVM), 112–132 (LMIV…ALIP), 151–171 (AQIV…FISP), 172–192 (SYTM…VLFI), 228–248 (ILYP…PWEA), 263–283 (IVYS…GFVL), 291–308 (YGLL…AFFI), 318–340 (VFFA…YTII), 352–372 (VYAV…VICG), and 381–401 (GKVI…ILLF).

This sequence belongs to the major facilitator superfamily.

The protein resides in the cell membrane. This is an uncharacterized protein from Bacillus subtilis (strain 168).